A 290-amino-acid polypeptide reads, in one-letter code: MTKDRLAALQAAQSDDEDMPEDVAVPVEGSFMEDFFKEVEEIRMMIDKIQANVEEVKKKHSAILSAPQSDEKTKQELEDLMADIKKTANRVRGKLKGIEQNIEQEEQQSKSNADLRIRKTQHSALSRKFVEVMTEYNRTQTDYRERCKGRIQRQLEITGRATTNEELEEMLEQGNSAVFTQGIIMETQQAKQTLADIEARHADIIKLENSIRELHDMFMDMAMLVESQGEMIDRIEYHVEHAMDYVQTATQDTKKALKYQSKARRKKIWIAICVLIAIIILVVFLAIYLT.

The tract at residues 1 to 21 (MTKDRLAALQAAQSDDEDMPE) is disordered. Over 1-267 (MTKDRLAALQ…KYQSKARRKK (267 aa)) the chain is Cytoplasmic. The region spanning 194–256 (LADIEARHAD…QTATQDTKKA (63 aa)) is the t-SNARE coiled-coil homology domain. The chain crosses the membrane as a helical; Anchor for type IV membrane protein span at residues 268–289 (IWIAICVLIAIIILVVFLAIYL). Position 290 (Thr-290) is a topological domain, vesicular.

It belongs to the syntaxin family. In terms of processing, (Microbial infection) Targeted and hydrolyzed by the light chain (LC) of P.bifermentans PMP1. Cleavage probably inhibits neurotransmitter release.

The protein resides in the cytoplasmic vesicle. The protein localises to the secretory vesicle. It localises to the synaptic vesicle membrane. In terms of biological role, plays a critical role in several secretory processes. The chain is Syntaxin-1A from Anopheles gambiae (African malaria mosquito).